Here is a 195-residue protein sequence, read N- to C-terminus: ATP-dependent Clp protease proteolytic subunit 1 (195 aa).

Ser-96 serves as the catalytic Nucleophile. Residue His-121 is part of the active site.

This sequence belongs to the peptidase S14 family. As to quaternary structure, fourteen ClpP subunits assemble into 2 heptameric rings which stack back to back to give a disk-like structure with a central cavity, resembling the structure of eukaryotic proteasomes.

It localises to the cytoplasm. The enzyme catalyses Hydrolysis of proteins to small peptides in the presence of ATP and magnesium. alpha-casein is the usual test substrate. In the absence of ATP, only oligopeptides shorter than five residues are hydrolyzed (such as succinyl-Leu-Tyr-|-NHMec, and Leu-Tyr-Leu-|-Tyr-Trp, in which cleavage of the -Tyr-|-Leu- and -Tyr-|-Trp bonds also occurs).. Its function is as follows. Cleaves peptides in various proteins in a process that requires ATP hydrolysis. Has a chymotrypsin-like activity. Plays a major role in the degradation of misfolded proteins. The protein is ATP-dependent Clp protease proteolytic subunit 1 of Prochlorococcus marinus (strain MIT 9312).